The primary structure comprises 2437 residues: MNRFLVKLTLLTAASLATVAQGQRCSEYCQNGGICEYKPSGEASCRCPADFVGAQCQFPNPCNPSPCRNGGVCRPQMQGNEVGVKCDCVLGFSDRLCLTPVNHACMNSPCRNGGTCSLLTLDTFTCRCQPGWSGKTCQLADPCASNPCANGGQCSAFESHYICTCPPNFHGQTCRQDVNECAVSPSPCRNGGTCINEVGSYLCRCPPEYTGPHCQRLYQPCLPSPCRSGGTCVQTSDTTHTCSCLPGFTGQTCEHNVDDCTQHACENGGPCIDGINTYNCHCDKHWTGQYCTEDVDECELSPNACQNGGTCHNTIGGFHCVCVNGWTGDDCSENIDDCASAACSHGATCHDRVASFFCECPHGRTGLLCHLDDACISNPCQKGSNCDTNPVSGKAICTCPPGYTGSACNQDIDECSLGANPCEHGGRCLNTKGSFQCKCLQGYEGPRCEMDVNECKSNPCQNDATCLDQIGGFHCICMPGYEGVFCQINSDDCASQPCLNGKCIDKINSFHCECPKGFSGSLCQVDVDECASTPCKNGAKCTDGPNKYTCECTPGFSGIHCELDINECASSPCHYGVCRDGVASFTCDCRPGYTGRLCETNINECLSQPCRNGGTCQDRENAYICTCPKGTTGVNCEINIDDCKRKPCDYGKCIDKINGYECVCEPGYSGSMCNINIDDCALNPCHNGGTCIDGVNSFTCLCPDGFRDATCLSQHNECSSNPCIHGSCLDQINSYRCVCEAGWMGRNCDININECLSNPCVNGGTCKDMTSGYLCTCRAGFSGPNCQMNINECASNPCLNQGSCIDDVAGFKCNCMLPYTGEVCENVLAPCSPRPCKNGGVCRESEDFQSFSCNCPAGWQGQTCEVDINECVRNPCTNGGVCENLRGGFQCRCNPGFTGALCENDIDDCEPNPCSNGGVCQDRVNGFVCVCLAGFRGERCAEDIDECVSAPCRNGGNCTDCVNSYTCSCPAGFSGINCEINTPDCTESSCFNGGTCVDGISSFSCVCLPGFTGNYCQHDVNECDSRPCQNGGSCQDGYGTYKCTCPHGYTGLNCQSLVRWCDSSPCKNGGSCWQQGASFTCQCASGWTGIYCDVPSVSCEVAARQQGVSVAVLCRHAGQCVDAGNTHLCRCQAGYTGSYCQEQVDECQPNPCQNGATCTDYLGGYSCECVPGYHGMNCSKEINECLSQPCQNGGTCIDLVNTYKCSCPRGTQGVHCEIDIDDCSPSVDPLTGEPRCFNGGRCVDRVGGYGCVCPAGFVGERCEGDVNECLSDPCDPSGSYNCVQLINDFRCECRTGYTGKRCETVFNGCKDTPCKNGGTCAVASNTKHGYICKCQPGYSGSSCEYDSQSCGSLRCRNGATCVSGHLSPRCLCAPGFSGHECQTRMDSPCLVNPCYNGGTCQPISDAPFYRCSCPANFNGLLCHILDYSFSGGQGRDIAPPVEVEIRCEIAQCEGRGGNAICDTQCNNHACGWDGGDCSLNFDDPWQNCSAALQCWRYFNDGKCDEQCATAGCLYDGFDCQRLEGQCNPLYDQYCRDHYADGHCDQGCNNAECEWDGLDCADDVPQKLAVGSLVLVVHIPPDELRNRSSSFLRELSSLLHTNVVFRRDANGEALIFPYYGSEHELSKHKRSDWTDPGQLMQRARRSLTSFLKPRTRRELDHMEVKGSIVYLEIDNRQCFQQSDECFQSATDVAAFLGALASSGNLNVPYIIEAVTSEGGPPKTGEMYPMFLVLLALAVLALAAVGVVVSRKRKREHGQLWFPEGFKVNEPKKKRREPVGEDSVGLKPLKNSDSSLMDEQLSEWAEDDTNKRFRFEGQSILEMSGQLDHRQWTQQHLDAADLRLNSMAPTPPQGQIENDCMDVNVRGPDGFTPLMIASCSGGGLENENGEAEEDPSADVITDFIYHGANLHNQTDRTGETALHLAARYARSDAAKRLLESCADANVQDNMGRTPLHAAVAADAQGVFQILIRNRATDLDARMHDGTTPLILATRLAVEGMVEELINCHADPNAVDDSGKSALHWAAAVNNVDAAVVLLKNGANKDLQNNKEETPLFLAAREGSYETAKVLLDHLANRDIADHLDQLPRDIAHERMHHDIVRLLEEYNLVRSPPLPLSPPLCCPNTYLGIKPSPGNNNNTAKKTRKPGGKGVGGKDSGKDIRTKKKKSGDGKNGGIMEVGVLSPVDSLESPHGYLSDVSSPPMMTSPFQQSPPISLNQLQGLADSHMGGALQGLGKPFDSAPRLSHLPVANNVGGAQAGACDWLQRVQQQQQQQQQQQQAGMLMPTMLSATNMPQVMGYPTMQSSHLGAPSHMIAHQNMAPMQHQNISHHFLGDLSGLDLQSSSGHAPIQTILPQDSQRMAPPISSTQFLTPPSQHSYSNPMDNTPNHQQVPDHPFLTPSAGSPDQWSSSSPHSNLSDWSEGISSPPTSMQMNHIPEAFK.

The signal sequence occupies residues 1–20 (MNRFLVKLTLLTAASLATVA). 4 consecutive EGF-like domains span residues 21–57 (QGQR…AQCQ), 58–98 (FPNP…RLCL), 101–138 (VNHA…KTCQ), and 139–175 (LADP…QTCR). Residues 21-1726 (QGQRCSEYCQ…GGPPKTGEMY (1706 aa)) are Extracellular-facing. Intrachain disulfides connect cysteine 25–cysteine 35, cysteine 29–cysteine 45, cysteine 47–cysteine 56, cysteine 62–cysteine 73, cysteine 67–cysteine 86, cysteine 88–cysteine 97, cysteine 105–cysteine 116, cysteine 110–cysteine 126, cysteine 128–cysteine 137, cysteine 143–cysteine 154, cysteine 148–cysteine 163, cysteine 165–cysteine 174, cysteine 181–cysteine 194, cysteine 188–cysteine 203, cysteine 205–cysteine 214, cysteine 221–cysteine 232, cysteine 226–cysteine 242, cysteine 244–cysteine 253, cysteine 260–cysteine 271, cysteine 265–cysteine 280, cysteine 282–cysteine 291, cysteine 298–cysteine 311, cysteine 305–cysteine 320, cysteine 322–cysteine 331, cysteine 338–cysteine 349, cysteine 343–cysteine 358, cysteine 360–cysteine 369, cysteine 375–cysteine 386, cysteine 380–cysteine 397, cysteine 399–cysteine 408, cysteine 415–cysteine 428, cysteine 422–cysteine 437, cysteine 439–cysteine 448, cysteine 455–cysteine 466, cysteine 460–cysteine 475, cysteine 477–cysteine 486, cysteine 493–cysteine 503, cysteine 498–cysteine 512, cysteine 514–cysteine 523, cysteine 530–cysteine 541, cysteine 535–cysteine 550, cysteine 552–cysteine 561, cysteine 568–cysteine 578, cysteine 573–cysteine 587, cysteine 589–cysteine 598, cysteine 605–cysteine 616, cysteine 610–cysteine 625, cysteine 627–cysteine 636, cysteine 643–cysteine 653, cysteine 648–cysteine 662, cysteine 664–cysteine 673, cysteine 680–cysteine 691, cysteine 685–cysteine 700, cysteine 702–cysteine 711, cysteine 718–cysteine 728, cysteine 723–cysteine 737, cysteine 739–cysteine 748, cysteine 755–cysteine 766, cysteine 760–cysteine 775, cysteine 777–cysteine 786, cysteine 793–cysteine 804, cysteine 798–cysteine 813, cysteine 815–cysteine 824, cysteine 831–cysteine 842, cysteine 836–cysteine 853, cysteine 855–cysteine 864, cysteine 871–cysteine 882, cysteine 876–cysteine 891, cysteine 893–cysteine 902, cysteine 909–cysteine 920, cysteine 914–cysteine 929, cysteine 931–cysteine 940, cysteine 947–cysteine 958, cysteine 952–cysteine 967, cysteine 969–cysteine 978, cysteine 985–cysteine 996, cysteine 990–cysteine 1005, cysteine 1007–cysteine 1016, cysteine 1023–cysteine 1034, cysteine 1028–cysteine 1043, cysteine 1045–cysteine 1054, cysteine 1061–cysteine 1072, cysteine 1066–cysteine 1081, cysteine 1083–cysteine 1092, cysteine 1099–cysteine 1120, cysteine 1114–cysteine 1129, cysteine 1131–cysteine 1140, cysteine 1147–cysteine 1158, cysteine 1152–cysteine 1167, cysteine 1169–cysteine 1178, cysteine 1185–cysteine 1196, cysteine 1190–cysteine 1205, cysteine 1207–cysteine 1216, cysteine 1223–cysteine 1242, cysteine 1236–cysteine 1251, cysteine 1253–cysteine 1262, cysteine 1269–cysteine 1282, cysteine 1274–cysteine 1291, cysteine 1293–cysteine 1302, cysteine 1309–cysteine 1320, cysteine 1314–cysteine 1332, cysteine 1334–cysteine 1343, cysteine 1350–cysteine 1361, cysteine 1355–cysteine 1370, cysteine 1372–cysteine 1381, cysteine 1389–cysteine 1400, cysteine 1394–cysteine 1411, cysteine 1413–cysteine 1422, cysteine 1447–cysteine 1470, cysteine 1452–cysteine 1465, and cysteine 1461–cysteine 1477. The region spanning 177–215 (DVNECAVSPSPCRNGGTCINEVGSYLCRCPPEYTGPHCQ) is the EGF-like 5; calcium-binding domain. An EGF-like 6 domain is found at 217-254 (LYQPCLPSPCRSGGTCVQTSDTTHTCSCLPGFTGQTCE). An O-linked (Fuc...) threonine; alternate glycan is attached at threonine 231. An O-linked (GalNAc...) threonine; alternate glycan is attached at threonine 231. One can recognise an EGF-like 7; calcium-binding domain in the interval 256 to 292 (NVDDCTQHACENGGPCIDGINTYNCHCDKHWTGQYCT). The EGF-like 8; calcium-binding domain maps to 294–332 (DVDECELSPNACQNGGTCHNTIGGFHCVCVNGWTGDDCS). The 37-residue stretch at 334-370 (NIDDCASAACSHGATCHDRVASFFCECPHGRTGLLCH) folds into the EGF-like 9; calcium-binding domain. The 39-residue stretch at 371-409 (LDDACISNPCQKGSNCDTNPVSGKAICTCPPGYTGSACN) folds into the EGF-like 10 domain. One can recognise an EGF-like 11; calcium-binding domain in the interval 411-449 (DIDECSLGANPCEHGGRCLNTKGSFQCKCLQGYEGPRCE). Residues 451 to 487 (DVNECKSNPCQNDATCLDQIGGFHCICMPGYEGVFCQ) enclose the EGF-like 12; calcium-binding domain. In terms of domain architecture, EGF-like 13; calcium-binding spans 489–524 (NSDDCASQPCLNGKCIDKINSFHCECPKGFSGSLCQ). One can recognise an EGF-like 14; calcium-binding domain in the interval 526 to 562 (DVDECASTPCKNGAKCTDGPNKYTCECTPGFSGIHCE). An EGF-like 15; calcium-binding domain is found at 564–599 (DINECASSPCHYGVCRDGVASFTCDCRPGYTGRLCE). Residues 601 to 637 (NINECLSQPCRNGGTCQDRENAYICTCPKGTTGVNCE) enclose the EGF-like 16; calcium-binding domain. The 36-residue stretch at 639–674 (NIDDCKRKPCDYGKCIDKINGYECVCEPGYSGSMCN) folds into the EGF-like 17; calcium-binding domain. The region spanning 676-712 (NIDDCALNPCHNGGTCIDGVNSFTCLCPDGFRDATCL) is the EGF-like 18; calcium-binding domain. The 36-residue stretch at 714–749 (QHNECSSNPCIHGSCLDQINSYRCVCEAGWMGRNCD) folds into the EGF-like 19; calcium-binding domain. The 37-residue stretch at 751 to 787 (NINECLSNPCVNGGTCKDMTSGYLCTCRAGFSGPNCQ) folds into the EGF-like 20; calcium-binding domain. Residues 789 to 825 (NINECASNPCLNQGSCIDDVAGFKCNCMLPYTGEVCE) enclose the EGF-like 21; calcium-binding domain. In terms of domain architecture, EGF-like 22 spans 827–865 (VLAPCSPRPCKNGGVCRESEDFQSFSCNCPAGWQGQTCE). The region spanning 867-903 (DINECVRNPCTNGGVCENLRGGFQCRCNPGFTGALCE) is the EGF-like 23; calcium-binding domain. An EGF-like 24; calcium-binding domain is found at 905–941 (DIDDCEPNPCSNGGVCQDRVNGFVCVCLAGFRGERCA). Residues 943–979 (DIDECVSAPCRNGGNCTDCVNSYTCSCPAGFSGINCE) enclose the EGF-like 25; calcium-binding domain. Asparagine 957 is a glycosylation site (N-linked (GlcNAc...) asparagine). Positions 981-1017 (NTPDCTESSCFNGGTCVDGISSFSCVCLPGFTGNYCQ) constitute an EGF-like 26 domain. One can recognise an EGF-like 27; calcium-binding domain in the interval 1019–1055 (DVNECDSRPCQNGGSCQDGYGTYKCTCPHGYTGLNCQ). 2 consecutive EGF-like domains span residues 1057 to 1093 (LVRW…IYCD) and 1095 to 1141 (PSVS…SYCQ). The EGF-like 30; calcium-binding domain occupies 1143 to 1179 (QVDECQPNPCQNGATCTDYLGGYSCECVPGYHGMNCS). Asparagine 1177 is a glycosylation site (N-linked (GlcNAc...) asparagine). The region spanning 1181–1217 (EINECLSQPCQNGGTCIDLVNTYKCSCPRGTQGVHCE) is the EGF-like 31; calcium-binding domain. The 45-residue stretch at 1219–1263 (DIDDCSPSVDPLTGEPRCFNGGRCVDRVGGYGCVCPAGFVGERCE) folds into the EGF-like 32; calcium-binding domain. EGF-like domains follow at residues 1265 to 1303 (DVNE…KRCE), 1305 to 1344 (VFNG…SSCE), 1346 to 1382 (DSQS…HECQ), and 1385 to 1423 (MDSP…LLCH). The O-linked (Fuc...) threonine; alternate glycan is linked to threonine 1399. The O-linked (GalNAc...) threonine; alternate glycan is linked to threonine 1399. LNR repeat units follow at residues 1447 to 1487 (CEIA…PWQN), 1488 to 1525 (CSAA…LEGQ), and 1526 to 1566 (CNPL…VPQK). Asparagine 1487 carries N-linked (GlcNAc...) asparagine glycosylation. Intrachain disulfides connect cysteine 1488-cysteine 1512, cysteine 1494-cysteine 1507, cysteine 1503-cysteine 1519, cysteine 1526-cysteine 1552, cysteine 1534-cysteine 1547, and cysteine 1543-cysteine 1559. Asparagine 1585 carries an N-linked (GlcNAc...) asparagine glycan. A helical membrane pass occupies residues 1727-1747 (PMFLVLLALAVLALAAVGVVV). The Cytoplasmic portion of the chain corresponds to 1748–2437 (SRKRKREHGQ…QMNHIPEAFK (690 aa)). The segment at 1770 to 1790 (KKKRREPVGEDSVGLKPLKNS) is disordered. ANK repeat units follow at residues 1867-1910 (DGFT…NLHN), 1915-1944 (TGET…DANV), 1948-1978 (MGRT…DLDA), 1982-2011 (DGTT…DPNA), 2015-2044 (SGKS…NKDL), and 2048-2077 (KEET…NRDI). 2 disordered regions span residues 2127 to 2174 (IKPS…GGIM) and 2356 to 2437 (RMAP…EAFK). Over residues 2356 to 2387 (RMAPPISSTQFLTPPSQHSYSNPMDNTPNHQQ) the composition is skewed to polar residues. The segment covering 2396–2411 (PSAGSPDQWSSSSPHS) has biased composition (low complexity). Positions 2412–2429 (NLSDWSEGISSPPTSMQM) are enriched in polar residues.

The protein belongs to the NOTCH family. Synthesized in the endoplasmic reticulum as an inactive form which is proteolytically cleaved by a furin-like convertase in the trans-Golgi network before it reaches the plasma membrane to yield an active, ligand-accessible form. Cleavage results in a C-terminal fragment N(TM) and a N-terminal fragment N(EC). Following ligand binding, it is cleaved by adam17 to yield a membrane-associated intermediate fragment called notch extracellular truncation (NEXT). Following endocytosis, this fragment is then cleaved by presenilin dependent gamma-secretase to release a Notch-derived peptide containing the intracellular domain (NICD) from the membrane. Post-translationally, O-glycosylated on the EGF-like domains. Contains both O-linked fucose and O-linked glucose. O-linked glycosylation by galnt11 is involved in determination of left/right symmetry: glycosylation promotes activation of notch1, possibly by promoting cleavage by adam17, modulating the balance between motile and immotile (sensory) cilia at the left-right organiser (LRO).

Its subcellular location is the cell membrane. It localises to the nucleus. Functionally, functions as a receptor for membrane-bound ligands Jagged-1 (JAG1), Jagged-2 (JAG2) and Delta-1 (DLL1) to regulate cell-fate determination. Upon ligand activation through the released notch intracellular domain (NICD) it forms a transcriptional activator complex with RBPJ/RBPSUH and activates genes of the enhancer of split locus. Affects the implementation of differentiation, proliferation and apoptotic programs. Involved in angiogenesis; negatively regulates endothelial cell proliferation and migration and angiogenic sprouting. Involved in the maturation of both CD4(+) and CD8(+) cells in the thymus. Important for follicular differentiation and possibly cell fate selection within the follicle. During cerebellar development, functions as a receptor for neuronal DNER and is involved in the differentiation of Bergmann glia. Represses neuronal and myogenic differentiation. May play an essential role in postimplantation development, probably in some aspect of cell specification and/or differentiation. May be involved in mesoderm development, somite formation and neurogenesis. Involved in determination of left/right symmetry by modulating the balance between motile and immotile (sensory) cilia at the left-right organiser (LRO). In Danio rerio (Zebrafish), this protein is Neurogenic locus notch homolog protein 1 (notch1a).